Reading from the N-terminus, the 104-residue chain is UPF0235 protein M446_3939 (104 aa).

It belongs to the UPF0235 family.

This Methylobacterium sp. (strain 4-46) protein is UPF0235 protein M446_3939.